Consider the following 449-residue polypeptide: Methionine aminopeptidase 2 (449 aa).

Residues 1-91 (MAAQAAPELA…PRIPLTTLFP (91 aa)) are disordered. A compositionally biased stretch (acidic residues) spans 34–50 (EEAENEGDSDDDRDDEQ). Over residues 61 to 75 (KKKKKKRPKKKKKTA) the composition is skewed to basic residues. Substrate is bound at residue H199. A divalent metal cation is bound by residues D219, D230, and H299. H307 contributes to the substrate binding site. Positions 335 and 430 each coordinate a divalent metal cation.

The protein belongs to the peptidase M24A family. Methionine aminopeptidase eukaryotic type 2 subfamily. Requires Co(2+) as cofactor. It depends on Zn(2+) as a cofactor. Mn(2+) is required as a cofactor. The cofactor is Fe(2+).

The protein resides in the cytoplasm. It catalyses the reaction Release of N-terminal amino acids, preferentially methionine, from peptides and arylamides.. Functionally, cotranslationally removes the N-terminal methionine from nascent proteins. The N-terminal methionine is often cleaved when the second residue in the primary sequence is small and uncharged (Met-Ala-, Cys, Gly, Pro, Ser, Thr, or Val). The sequence is that of Methionine aminopeptidase 2 from Arthroderma benhamiae (strain ATCC MYA-4681 / CBS 112371) (Trichophyton mentagrophytes).